Consider the following 208-residue polypeptide: Large ribosomal subunit protein uL4 (208 aa).

Residues 44 to 89 (RRQGTHKAKNRSEVRGGGRKPYRQKGTGHARQGSTRSPLMTGGGTI) are disordered. Positions 60-71 (GGRKPYRQKGTG) are enriched in basic residues.

It belongs to the universal ribosomal protein uL4 family. Part of the 50S ribosomal subunit.

Its function is as follows. One of the primary rRNA binding proteins, this protein initially binds near the 5'-end of the 23S rRNA. It is important during the early stages of 50S assembly. It makes multiple contacts with different domains of the 23S rRNA in the assembled 50S subunit and ribosome. In terms of biological role, forms part of the polypeptide exit tunnel. The sequence is that of Large ribosomal subunit protein uL4 from Chlorobium phaeobacteroides (strain BS1).